The sequence spans 359 residues: Non-functional pseudokinase ZRK2 (359 aa).

The segment covering 1–10 (MKSMVKKLKQ) has biased composition (basic residues). Residues 1 to 20 (MKSMVKKLKQSLRSGSLEKR) are disordered. Positions 64 to 356 (LKATSNFGSS…KELKQIETLF (293 aa)) constitute a Protein kinase domain. Residues 70 to 78 (FGSSCFVTA) and K97 contribute to the ATP site.

It belongs to the protein kinase superfamily. Ser/Thr protein kinase family. ZRK subfamily.

The protein is Non-functional pseudokinase ZRK2 of Arabidopsis thaliana (Mouse-ear cress).